A 257-amino-acid polypeptide reads, in one-letter code: Phosphonates import ATP-binding protein PhnC 1 (257 aa).

The ABC transporter domain maps to 2-246; that stretch reads LKITNLTKRY…EMDTIYAGVP (245 aa). Position 35-42 (35-42) interacts with ATP; it reads GSSGAGKS.

It belongs to the ABC transporter superfamily. Phosphonates importer (TC 3.A.1.9.1) family. The complex is composed of two ATP-binding proteins (PhnC), two transmembrane proteins (PhnE) and a solute-binding protein (PhnD).

The protein resides in the cell inner membrane. It catalyses the reaction phosphonate(out) + ATP + H2O = phosphonate(in) + ADP + phosphate + H(+). In terms of biological role, part of the ABC transporter complex PhnCDE involved in phosphonates import. Responsible for energy coupling to the transport system. The chain is Phosphonates import ATP-binding protein PhnC 1 from Ruegeria sp. (strain TM1040) (Silicibacter sp.).